Here is a 327-residue protein sequence, read N- to C-terminus: ATP-dependent 6-phosphofructokinase (327 aa).

ATP is bound by residues glycine 11, 72 to 73, and 102 to 105; these read RS and GDGS. Position 103 (aspartate 103) interacts with Mg(2+). A substrate-binding site is contributed by 127–129; it reads TID. The active-site Proton acceptor is aspartate 129. Arginine 156 contacts ADP. Substrate is bound by residues arginine 164 and 171 to 173; that span reads MGR. An ADP-binding site is contributed by 187–189; the sequence is GAE. Residues glutamate 224, arginine 245, and 251–254 each bind substrate; that span reads HIQR.

This sequence belongs to the phosphofructokinase type A (PFKA) family. ATP-dependent PFK group I subfamily. Prokaryotic clade 'B1' sub-subfamily. As to quaternary structure, homotetramer. Mg(2+) serves as cofactor.

It localises to the cytoplasm. It carries out the reaction beta-D-fructose 6-phosphate + ATP = beta-D-fructose 1,6-bisphosphate + ADP + H(+). It functions in the pathway carbohydrate degradation; glycolysis; D-glyceraldehyde 3-phosphate and glycerone phosphate from D-glucose: step 3/4. Allosterically activated by ADP and other diphosphonucleosides, and allosterically inhibited by phosphoenolpyruvate. Catalyzes the phosphorylation of D-fructose 6-phosphate to fructose 1,6-bisphosphate by ATP, the first committing step of glycolysis. This Sulfurovum sp. (strain NBC37-1) protein is ATP-dependent 6-phosphofructokinase.